Reading from the N-terminus, the 364-residue chain is Medium-wave-sensitive opsin 1 (364 aa).

The segment at 1–24 is disordered; that stretch reads MAQRWDPQRLAGGQPQDSHEDSTQ. Residues 1–52 lie on the Extracellular side of the membrane; it reads MAQRWDPQRLAGGQPQDSHEDSTQSSIFTYTNSNATRGPFEGPNYHIAPRWV. The required for 11-cis-retinal regeneration stretch occupies residues 17–43; that stretch reads DSHEDSTQSSIFTYTNSNATRGPFEGP. Residue asparagine 34 is glycosylated (N-linked (GlcNAc...) asparagine). A helical transmembrane segment spans residues 53–77; the sequence is YHITSTWMIIVVIASVFTNGLVLVA. Over 78-89 the chain is Cytoplasmic; that stretch reads TMKFKKLRHPLN. A helical transmembrane segment spans residues 90 to 115; sequence WILVNLAIADLAETVIASTISVVNQL. At 116-129 the chain is on the extracellular side; that stretch reads YGYFVLGHPLCVVE. A disulfide bridge links cysteine 126 with cysteine 203. A helical transmembrane segment spans residues 130–149; that stretch reads GYTVSVCGITGLWSLAIISW. The Cytoplasmic portion of the chain corresponds to 150–168; it reads ERWLVVCKPFGNMRFDAKL. A helical transmembrane segment spans residues 169-192; sequence AIVGIAFSWIWSAVWTAPPIFGWS. The Extracellular segment spans residues 193-218; the sequence is RYWPYGLKTSCGPDVFSGTSYPGVQS. A helical membrane pass occupies residues 219–246; sequence YMMVLMVTCCIIPLSIIILCYLQVWLAI. The Cytoplasmic segment spans residues 247–268; sequence RAVAKQQKESESTQKAEKEVTR. The helical transmembrane segment at 269–292 threads the bilayer; it reads MVVVMVFAYCLCWGPYTFFACFAT. The Extracellular segment spans residues 293-300; it reads ANPGYAFH. A helical membrane pass occupies residues 301-320; that stretch reads PLVAALPAYFAKSATIYNPI. Lysine 312 is subject to N6-(retinylidene)lysine. Residues 321 to 364 lie on the Cytoplasmic side of the membrane; it reads IYVFMNRQFRNCILQLFGKKVDDTSELSSASKTEASSVSSVSPA.

Belongs to the G-protein coupled receptor 1 family. Opsin subfamily. In terms of assembly, monomer. Homodimer. Homotetramer. Post-translationally, O-glycosylated. In terms of processing, phosphorylated on some or all of the serine and threonine residues present in the C-terminal region. In terms of tissue distribution, expressed in cone photoreceptor cells.

The protein resides in the membrane. Its function is as follows. Visual pigments are the light-absorbing molecules that mediate vision. They consist of an apoprotein, opsin, covalently linked to cis-retinal. May increase spectral sensitivity in dim light. This Sciurus carolinensis (Eastern gray squirrel) protein is Medium-wave-sensitive opsin 1 (OPN1MW).